The chain runs to 574 residues: Actin-binding protein wsp1 (574 aa).

In terms of domain architecture, WH1 spans 19 to 130 (IPKSTNKIIA…KKVLDKGCHP (112 aa)). 3 disordered regions span residues 144–186 (KGSS…ELLN), 221–494 (AGTP…IAEL), and 517–574 (KSRK…DEWD). The span at 149-158 (HAPNNSNIQP) shows a compositional bias: polar residues. Composition is skewed to pro residues over residues 230–240 (PPIPPSIPSSR) and 251–260 (PAPPPIPPPS). Low complexity-rich tracts occupy residues 297-306 (SRVSAAALAA) and 324-335 (KPPIGNGSSNSS). A compositionally biased stretch (pro residues) spans 352-368 (PLPPQGRSAPPPPPPRS). S386 is modified (phosphoserine). Pro residues predominate over residues 415–485 (PPVPTPPSLP…PPPAPAPAPA (71 aa)). Residues 499-518 (GRANLMASIRASGGMDLLKS) enclose the WH2 domain. The segment covering 521–545 (VSASPSVASTKTSNPPVEAPPSNNL) has biased composition (polar residues). Positions 563–574 (SDEEDEDDDEWD) are enriched in acidic residues.

As to quaternary structure, interacts with vrp1.

It is found in the cytoplasm. It localises to the cytoskeleton. Has a role in regulating actin assembly, so regulating polarized growth. In Schizosaccharomyces pombe (strain 972 / ATCC 24843) (Fission yeast), this protein is Actin-binding protein wsp1 (wsp1).